Here is a 293-residue protein sequence, read N- to C-terminus: Epimerase family protein SDR39U1 (293 aa).

NADP(+) is bound by residues Ser31–Arg32, Leu58–Ala59, Glu77, Arg82, and Val160.

It belongs to the NAD(P)-dependent epimerase/dehydratase family. SDR39U1 subfamily. Expressed in adrenal gland.

In terms of biological role, putative NADP-dependent oxidoreductase. The polypeptide is Epimerase family protein SDR39U1 (SDR39U1) (Homo sapiens (Human)).